The primary structure comprises 347 residues: MNPLALIMITTTIILGTVIVMMSSHWLLVWIGFEMNMLAVIPVLMKRHNPRAVEAATKYFLTQATASMLLMLAVVTNLLYSGQWTVANMTNPLASTVMTLALAMKLGLSPFHFWVPEVTQGVPLLSGLILLTWQKLAPLSVLYQTSPSLNLNLLLAMATVSVAVGGWGGLNQTQLRKILAYSSIAHMGWMTIILTYNPTLTLLNLLLYILMTATTFMLFMSNSSTTTLMLSHSWNKSPVAATSVLIIMLSLGGLPPLSGFLPKWMIIQELTKNESIFLPTLMAMMALLSLYFYMRLTYSTSLTLFPSTNNMKMKWQLEDTKRTPLLSPLIVMSTLALPLAPILSTLN.

Transmembrane regions (helical) follow at residues 4-21 (LALIMITTTIILGTVIVM), 26-44 (WLLVWIGFEMNMLAVIPVL), 59-79 (YFLTQATASMLLMLAVVTNLL), 93-115 (LASTVMTLALAMKLGLSPFHFWV), 149-169 (LNLNLLLAMATVSVAVGGWGG), 178-198 (ILAYSSIAHMGWMTIILTYNP), 200-220 (LTLLNLLLYILMTATTFMLFM), 241-261 (ATSVLIIMLSLGGLPPLSGFL), 274-294 (ESIFLPTLMAMMALLSLYFYM), and 323-343 (TPLLSPLIVMSTLALPLAPIL).

Belongs to the complex I subunit 2 family. As to quaternary structure, core subunit of respiratory chain NADH dehydrogenase (Complex I) which is composed of 45 different subunits. Interacts with TMEM242.

Its subcellular location is the mitochondrion inner membrane. It catalyses the reaction a ubiquinone + NADH + 5 H(+)(in) = a ubiquinol + NAD(+) + 4 H(+)(out). Functionally, core subunit of the mitochondrial membrane respiratory chain NADH dehydrogenase (Complex I) which catalyzes electron transfer from NADH through the respiratory chain, using ubiquinone as an electron acceptor. Essential for the catalytic activity and assembly of complex I. In Cardioderma cor (Heart-nosed bat), this protein is NADH-ubiquinone oxidoreductase chain 2.